A 216-amino-acid chain; its full sequence is Protein Syd (216 aa).

This sequence belongs to the Syd family.

Its subcellular location is the cell inner membrane. Interacts with the SecY protein in vivo. May bind preferentially to an uncomplexed state of SecY, thus functioning either as a chelating agent for excess SecY in the cell or as a regulatory factor that negatively controls the translocase function. The polypeptide is Protein Syd (Shewanella putrefaciens (strain CN-32 / ATCC BAA-453)).